A 525-amino-acid chain; its full sequence is ATP synthase subunit alpha (525 aa).

Residue 171–178 participates in ATP binding; that stretch reads GDRQTGKS.

Belongs to the ATPase alpha/beta chains family. F-type ATPases have 2 components, CF(1) - the catalytic core - and CF(0) - the membrane proton channel. CF(1) has five subunits: alpha(3), beta(3), gamma(1), delta(1), epsilon(1). CF(0) has three main subunits: a(1), b(2) and c(9-12). The alpha and beta chains form an alternating ring which encloses part of the gamma chain. CF(1) is attached to CF(0) by a central stalk formed by the gamma and epsilon chains, while a peripheral stalk is formed by the delta and b chains.

The protein resides in the cell inner membrane. It catalyses the reaction ATP + H2O + 4 H(+)(in) = ADP + phosphate + 5 H(+)(out). In terms of biological role, produces ATP from ADP in the presence of a proton gradient across the membrane. The alpha chain is a regulatory subunit. The chain is ATP synthase subunit alpha from Flavobacterium psychrophilum (strain ATCC 49511 / DSM 21280 / CIP 103535 / JIP02/86).